The following is a 320-amino-acid chain: Probable cell division protein WhiA (320 aa).

The segment at residues 282 to 315 (TLKELGEMLSPAIGKSGVNHRLRKIDEIATKLQE) is a DNA-binding region (H-T-H motif).

This sequence belongs to the WhiA family.

Functionally, involved in cell division and chromosome segregation. This Alkaliphilus oremlandii (strain OhILAs) (Clostridium oremlandii (strain OhILAs)) protein is Probable cell division protein WhiA.